Here is a 127-residue protein sequence, read N- to C-terminus: Arginine decarboxylase proenzyme (127 aa).

Residue serine 72 is the Schiff-base intermediate with substrate; via pyruvic acid of the active site. Serine 72 is modified (pyruvic acid (Ser); by autocatalysis). The active-site Proton acceptor; for processing activity is the histidine 77. Cysteine 92 acts as the Proton donor; for catalytic activity in catalysis.

It belongs to the prokaryotic AdoMetDC family. Type 1 subfamily. As to quaternary structure, heterooctamer of four alpha and four beta chains arranged as a tetramer of alpha/beta heterodimers. The cofactor is pyruvate. Is synthesized initially as an inactive proenzyme. Formation of the active enzyme involves a self-maturation process in which the active site pyruvoyl group is generated from an internal serine residue via an autocatalytic post-translational modification. Two non-identical subunits are generated from the proenzyme in this reaction, and the pyruvate is formed at the N-terminus of the alpha chain, which is derived from the carboxyl end of the proenzyme. The post-translation cleavage follows an unusual pathway, termed non-hydrolytic serinolysis, in which the side chain hydroxyl group of the serine supplies its oxygen atom to form the C-terminus of the beta chain, while the remainder of the serine residue undergoes an oxidative deamination to produce ammonia and the pyruvoyl group blocking the N-terminus of the alpha chain.

The catalysed reaction is L-arginine + H(+) = agmatine + CO2. Its pathway is amine and polyamine biosynthesis; agmatine biosynthesis; agmatine from L-arginine: step 1/1. Functionally, specifically catalyzes the decarboxylation of L-arginine to agmatine. Has no S-adenosylmethionine decarboxylase (AdoMetDC) activity. This chain is Arginine decarboxylase proenzyme, found in Staphylothermus marinus (strain ATCC 43588 / DSM 3639 / JCM 9404 / F1).